Here is a 485-residue protein sequence, read N- to C-terminus: MTTLMVQGTTSDAGKSTLVTALCRWLARQGVAVVPFKPQNMALNSAVTADGGEIGRAQAVQAQAANLAPHTDMNPVLLKPNSDIGAQVIVHGRAVTSMDAAAYHDYKRVALQAVLDSHRRLSAAYRVVMVEGAGSPAEINLRAGDIANMGFAEAVDCPVILIADIDKGGVFAHLVGTLALLSESEQARVQGFVINRFRGDIALLQPGLDWLEQRTGKPVLGVLPYLMDLHLEAEDAIDVRQAGKSAEVLKVVVPVLPRISNHTDFDPLRLHPQVDLQFVGPGQPVPSADLIILPGSKSVRADLAWLRANGWEAAIQKHLRYGGKLLGICGGLQMLGTRIADPLGLEGPAGESAGLGLLDFATVLEADKQLRNVQGRLLPEAVPVTGYEIHAGVSTGSALARPAVQLDDGRSDGAISADGQILGTYLHGLFESPDACAALLRWAGLEAVQQVDYHALRERDIERLADLVETHLDTAKLRRFCGLGG.

The GATase cobBQ-type domain occupies 248-435; it reads VLKVVVPVLP…LHGLFESPDA (188 aa). C329 acts as the Nucleophile in catalysis. H427 is a catalytic residue.

It belongs to the CobB/CobQ family. CobQ subfamily.

The protein operates within cofactor biosynthesis; adenosylcobalamin biosynthesis. Its function is as follows. Catalyzes amidations at positions B, D, E, and G on adenosylcobyrinic A,C-diamide. NH(2) groups are provided by glutamine, and one molecule of ATP is hydrogenolyzed for each amidation. This Stutzerimonas stutzeri (strain A1501) (Pseudomonas stutzeri) protein is Cobyric acid synthase.